Here is a 346-residue protein sequence, read N- to C-terminus: Nitrilase 3 (346 aa).

N-acetylserine is present on Ser2. One can recognise a CN hydrolase domain in the interval 25–297 (VRVTIVQSST…EGLVTADLDL (273 aa)). The Proton acceptor role is filled by Glu65. Lys152 functions as the Proton donor in the catalytic mechanism. Cys186 serves as the catalytic Nucleophile.

It belongs to the carbon-nitrogen hydrolase superfamily. Nitrilase family.

Its subcellular location is the cell membrane. It carries out the reaction a nitrile + 2 H2O = a carboxylate + NH4(+). Functionally, can convert indole-3-acetonitrile to the plant hormone indole-3-acetic acid. This Arabidopsis thaliana (Mouse-ear cress) protein is Nitrilase 3 (NIT3).